Consider the following 141-residue polypeptide: NADPH-dependent 7-cyano-7-deazaguanine reductase (141 aa).

The Thioimide intermediate role is filled by C34. D41 serves as the catalytic Proton donor. Residues V56 to L58 and H75 to E76 contribute to the substrate site.

Belongs to the GTP cyclohydrolase I family. QueF type 1 subfamily.

The protein resides in the cytoplasm. It catalyses the reaction 7-aminomethyl-7-carbaguanine + 2 NADP(+) = 7-cyano-7-deazaguanine + 2 NADPH + 3 H(+). The protein operates within tRNA modification; tRNA-queuosine biosynthesis. Its function is as follows. Catalyzes the NADPH-dependent reduction of 7-cyano-7-deazaguanine (preQ0) to 7-aminomethyl-7-deazaguanine (preQ1). The sequence is that of NADPH-dependent 7-cyano-7-deazaguanine reductase from Acidithiobacillus ferrooxidans (strain ATCC 23270 / DSM 14882 / CIP 104768 / NCIMB 8455) (Ferrobacillus ferrooxidans (strain ATCC 23270)).